The following is a 660-amino-acid chain: Acetyl-coenzyme A synthetase (660 aa).

CoA-binding positions include 197-200 (RGGK) and Thr317. Residues 397–399 (GEP), 421–426 (DTFWQT), Asp512, and Arg528 each bind ATP. Ser536 provides a ligand contact to CoA. ATP is bound at residue Arg539. Mg(2+) contacts are provided by Val550 and Val555. Lys625 is subject to N6-acetyllysine.

This sequence belongs to the ATP-dependent AMP-binding enzyme family. Mg(2+) is required as a cofactor. Acetylated. Deacetylation by the SIR2-homolog deacetylase activates the enzyme.

It carries out the reaction acetate + ATP + CoA = acetyl-CoA + AMP + diphosphate. It functions in the pathway ketone degradation; acetoin degradation. Catalyzes the conversion of acetate into acetyl-CoA (AcCoA), an essential intermediate at the junction of anabolic and catabolic pathways. AcsA undergoes a two-step reaction. In the first half reaction, AcsA combines acetate with ATP to form acetyl-adenylate (AcAMP) intermediate. In the second half reaction, it can then transfer the acetyl group from AcAMP to the sulfhydryl group of CoA, forming the product AcCoA. Although acetate is the preferred substrate of AcsA, propionate is also used, but at a diminished rate compared with that of acetate. Fatty acids with more than three carbon atoms are usually not accepted as substrates by AcsA. The polypeptide is Acetyl-coenzyme A synthetase (Cupriavidus necator (strain ATCC 17699 / DSM 428 / KCTC 22496 / NCIMB 10442 / H16 / Stanier 337) (Ralstonia eutropha)).